A 283-amino-acid chain; its full sequence is Phosphatidylserine decarboxylase proenzyme (283 aa).

Residues Asp89, His146, and Ser249 each act as charge relay system; for autoendoproteolytic cleavage activity in the active site. Ser249 acts as the Schiff-base intermediate with substrate; via pyruvic acid; for decarboxylase activity in catalysis. Ser249 carries the pyruvic acid (Ser); by autocatalysis modification.

This sequence belongs to the phosphatidylserine decarboxylase family. PSD-B subfamily. Prokaryotic type I sub-subfamily. Heterodimer of a large membrane-associated beta subunit and a small pyruvoyl-containing alpha subunit. The cofactor is pyruvate. Is synthesized initially as an inactive proenzyme. Formation of the active enzyme involves a self-maturation process in which the active site pyruvoyl group is generated from an internal serine residue via an autocatalytic post-translational modification. Two non-identical subunits are generated from the proenzyme in this reaction, and the pyruvate is formed at the N-terminus of the alpha chain, which is derived from the carboxyl end of the proenzyme. The autoendoproteolytic cleavage occurs by a canonical serine protease mechanism, in which the side chain hydroxyl group of the serine supplies its oxygen atom to form the C-terminus of the beta chain, while the remainder of the serine residue undergoes an oxidative deamination to produce ammonia and the pyruvoyl prosthetic group on the alpha chain. During this reaction, the Ser that is part of the protease active site of the proenzyme becomes the pyruvoyl prosthetic group, which constitutes an essential element of the active site of the mature decarboxylase.

The protein resides in the cell membrane. The enzyme catalyses a 1,2-diacyl-sn-glycero-3-phospho-L-serine + H(+) = a 1,2-diacyl-sn-glycero-3-phosphoethanolamine + CO2. It functions in the pathway phospholipid metabolism; phosphatidylethanolamine biosynthesis; phosphatidylethanolamine from CDP-diacylglycerol: step 2/2. Functionally, catalyzes the formation of phosphatidylethanolamine (PtdEtn) from phosphatidylserine (PtdSer). In Legionella pneumophila (strain Lens), this protein is Phosphatidylserine decarboxylase proenzyme.